The sequence spans 261 residues: Cytochrome c oxidase subunit 3 (261 aa).

Topologically, residues 1–15 (MTHQTHAYHMVNPSP) are mitochondrial matrix. Residues 16 to 34 (WPLTGALSALLMTSGLAMW) form a helical membrane-spanning segment. The Mitochondrial intermembrane portion of the chain corresponds to 35–40 (FHYNLT). The helical transmembrane segment at 41–66 (LLLTLGMTTNLLTMYQWWRDIIREST) threads the bilayer. Residues 67–72 (FQGHHT) lie on the Mitochondrial matrix side of the membrane. The helical transmembrane segment at 73 to 105 (PIVQKGLRYGMILFIISEVFFFAGFFWAFYHSS) threads the bilayer. The Mitochondrial intermembrane portion of the chain corresponds to 106–128 (LAPTPELGGCWPPTGIIPLNPLE). The helical transmembrane segment at 129-152 (VPLLNTSVLLASGVSITWAHHSLM) threads the bilayer. Topologically, residues 153–155 (EGN) are mitochondrial matrix. Residues 156 to 183 (RKHMLQALFITISLGVYFTLLQASEYYE) traverse the membrane as a helical segment. The Mitochondrial intermembrane portion of the chain corresponds to 184–190 (TSFTISD). Residues 191 to 223 (GVYGSTFFMATGFHGLHVIIGSTFLIVCFLRQL) form a helical membrane-spanning segment. The Mitochondrial matrix segment spans residues 224-232 (KYHFTSNHH). A helical transmembrane segment spans residues 233–256 (FGFEAAAWYWHFVDVVWLFLYVSI). Residues 257-261 (YWWGS) lie on the Mitochondrial intermembrane side of the membrane.

Belongs to the cytochrome c oxidase subunit 3 family. Component of the cytochrome c oxidase (complex IV, CIV), a multisubunit enzyme composed of 14 subunits. The complex is composed of a catalytic core of 3 subunits MT-CO1, MT-CO2 and MT-CO3, encoded in the mitochondrial DNA, and 11 supernumerary subunits COX4I, COX5A, COX5B, COX6A, COX6B, COX6C, COX7A, COX7B, COX7C, COX8 and NDUFA4, which are encoded in the nuclear genome. The complex exists as a monomer or a dimer and forms supercomplexes (SCs) in the inner mitochondrial membrane with NADH-ubiquinone oxidoreductase (complex I, CI) and ubiquinol-cytochrome c oxidoreductase (cytochrome b-c1 complex, complex III, CIII), resulting in different assemblies (supercomplex SCI(1)III(2)IV(1) and megacomplex MCI(2)III(2)IV(2)).

It is found in the mitochondrion inner membrane. It catalyses the reaction 4 Fe(II)-[cytochrome c] + O2 + 8 H(+)(in) = 4 Fe(III)-[cytochrome c] + 2 H2O + 4 H(+)(out). Functionally, component of the cytochrome c oxidase, the last enzyme in the mitochondrial electron transport chain which drives oxidative phosphorylation. The respiratory chain contains 3 multisubunit complexes succinate dehydrogenase (complex II, CII), ubiquinol-cytochrome c oxidoreductase (cytochrome b-c1 complex, complex III, CIII) and cytochrome c oxidase (complex IV, CIV), that cooperate to transfer electrons derived from NADH and succinate to molecular oxygen, creating an electrochemical gradient over the inner membrane that drives transmembrane transport and the ATP synthase. Cytochrome c oxidase is the component of the respiratory chain that catalyzes the reduction of oxygen to water. Electrons originating from reduced cytochrome c in the intermembrane space (IMS) are transferred via the dinuclear copper A center (CU(A)) of subunit 2 and heme A of subunit 1 to the active site in subunit 1, a binuclear center (BNC) formed by heme A3 and copper B (CU(B)). The BNC reduces molecular oxygen to 2 water molecules using 4 electrons from cytochrome c in the IMS and 4 protons from the mitochondrial matrix. The sequence is that of Cytochrome c oxidase subunit 3 (MT-CO3) from Felis catus (Cat).